The following is a 520-amino-acid chain: Ribonuclease Y (520 aa).

Residues 3–23 (FILVLCTVSSLFVGGGTGIFL) form a helical membrane-spanning segment. The KH domain occupies 209–272 (TVTAVTLPSE…QVAKMALERL (64 aa)). In terms of domain architecture, HD spans 335-429 (VLRHSIEVAS…VQASDCLSGA (95 aa)).

It belongs to the RNase Y family.

It localises to the cell membrane. Its function is as follows. Endoribonuclease that initiates mRNA decay. The protein is Ribonuclease Y of Lawsonia intracellularis (strain PHE/MN1-00).